The following is a 197-amino-acid chain: MYB-like transcription factor EOBII (197 aa).

HTH myb-type domains are found at residues 10–62 and 63–117; these read DAEV…LNYL and RPDV…QKHI. DNA-binding regions (H-T-H motif) lie at residues 38 to 62 and 90 to 113; these read WNSLAKSAGLKRTGKSCRLRWLNYL and WSKIAKHLPGRTDNEIKNYWRTRI. The tract at residues 125-158 is disordered; the sequence is GQAASSEQNDHQEACTSQMSNGPNDNTIDQTYSP. Polar residues predominate over residues 138-158; it reads ACTSQMSNGPNDNTIDQTYSP.

In terms of tissue distribution, specifically expressed in flowers, mostly in stigmas, petal tubes and petal limbs, and, to a lower extent, in anthers and stamen. Also present at low levels in roots, stems, leaves and sepals.

It localises to the nucleus. Its function is as follows. MYB-type transcription factor controlling the production of volatile organic compounds (VOCs), including floral volatile benzenoids and phenylpropanoids (FVBP), in flowers of fragrant cultivars (e.g. cv. Mitchell and cv. V26) by regulating the expression of ODO1 and EOBI, key regulators of the shikimate pathway, and of several biosynthetic floral scent-related genes including IGS, PAL2 and CFAT. This scent, mostly produced in the evening and night by the petals, attracts the pollinators (e.g. the night-active hawkmoth pollinator Manduca sexta). Binds to and activates the ODO1 and EOBI promoters via MYB binding sites (MBS) 5'-AAACCTAAT-3' and 5'-CTAACT-3'. Regulates the promoters of IGS1, CFAT and PAL2. Controls flowers petal opening by modulating a global transcriptomic switch. This is MYB-like transcription factor EOBII from Petunia hybrida (Petunia).